The primary structure comprises 386 residues: Putative acid--amine ligase YgiC (386 aa).

100–102 (RLD) serves as a coordination point for ATP. Residues Asp-102, Glu-115, and Asn-117 each contribute to the Mg(2+) site. Residues Lys-267, Lys-302, Gly-309, Gln-336, and 371–373 (LIT) each bind ATP.

It belongs to the glutathionylspermidine synthase preATP-grasp family.

Functionally, may be a ligase forming an amide bond. Shows ATPase activity. The protein is Putative acid--amine ligase YgiC (ygiC) of Escherichia coli O157:H7.